The chain runs to 411 residues: Probable tRNA pseudouridine synthase D (411 aa).

The Nucleophile role is filled by Asp-79. In terms of domain architecture, TRUD spans 150–369; sequence GFPNYFGQQR…STGDRRIVSA (220 aa).

The protein belongs to the pseudouridine synthase TruD family.

It catalyses the reaction uridine(13) in tRNA = pseudouridine(13) in tRNA. Its function is as follows. Could be responsible for synthesis of pseudouridine from uracil-13 in transfer RNAs. In Thermoplasma acidophilum (strain ATCC 25905 / DSM 1728 / JCM 9062 / NBRC 15155 / AMRC-C165), this protein is Probable tRNA pseudouridine synthase D.